The sequence spans 411 residues: ATP-dependent RNA helicase eIF4A (411 aa).

The tract at residues 1 to 23 is disordered; that stretch reads MSKPEDTSAAAAAPAGEAGNNLN. The segment covering 9–19 has biased composition (low complexity); that stretch reads AAAAAPAGEAG. Positions 38–66 match the Q motif motif; the sequence is DNFDNMELKEELLRGVYAYGFERPSAIQA. The Helicase ATP-binding domain maps to 69-239; that stretch reads IVPVIKGHDV…KKFMRDPIRI (171 aa). 82-89 provides a ligand contact to ATP; that stretch reads AQSGTGKT. The DEAD box motif lies at 187 to 190; the sequence is DEAD. A Helicase C-terminal domain is found at 250–411; the sequence is GIKQFYVAVE…EMPLNVADLI (162 aa).

The protein belongs to the DEAD box helicase family. eIF4A subfamily. As to quaternary structure, component of the eIF4F complex, which composition varies with external and internal environmental conditions. It is composed of at least eIF4A, eIF4E and eIF4G.

The protein localises to the cytoplasm. The catalysed reaction is ATP + H2O = ADP + phosphate + H(+). In terms of biological role, ATP-dependent RNA helicase which is a subunit of the eIF4F complex involved in cap recognition and is required for mRNA binding to ribosome. In the current model of translation initiation, eIF4A unwinds RNA secondary structures in the 5'-UTR of mRNAs which is necessary to allow efficient binding of the small ribosomal subunit, and subsequent scanning for the initiator codon. This chain is ATP-dependent RNA helicase eIF4A (TIF1), found in Mycosarcoma maydis (Corn smut fungus).